A 309-amino-acid chain; its full sequence is tRNA dimethylallyltransferase (309 aa).

ATP is bound at residue 10 to 17; that stretch reads GPTASGKT. 12–17 is a substrate binding site; that stretch reads TASGKT. Interaction with substrate tRNA stretches follow at residues 35 to 38 and 240 to 245; these read DSAL and RCVGYR.

This sequence belongs to the IPP transferase family. In terms of assembly, monomer. Requires Mg(2+) as cofactor.

It catalyses the reaction adenosine(37) in tRNA + dimethylallyl diphosphate = N(6)-dimethylallyladenosine(37) in tRNA + diphosphate. In terms of biological role, catalyzes the transfer of a dimethylallyl group onto the adenine at position 37 in tRNAs that read codons beginning with uridine, leading to the formation of N6-(dimethylallyl)adenosine (i(6)A). The sequence is that of tRNA dimethylallyltransferase from Baumannia cicadellinicola subsp. Homalodisca coagulata.